The sequence spans 77 residues: Acyl carrier protein (77 aa).

Positions 1–76 (MSLEDDVKAI…DVIKYIQERQ (76 aa)) constitute a Carrier domain. An O-(pantetheine 4'-phosphoryl)serine modification is found at S36.

Belongs to the acyl carrier protein (ACP) family. 4'-phosphopantetheine is transferred from CoA to a specific serine of apo-ACP by AcpS. This modification is essential for activity because fatty acids are bound in thioester linkage to the sulfhydryl of the prosthetic group.

It is found in the cytoplasm. The protein operates within lipid metabolism; fatty acid biosynthesis. Carrier of the growing fatty acid chain in fatty acid biosynthesis. The chain is Acyl carrier protein from Chlamydia trachomatis serovar A (strain ATCC VR-571B / DSM 19440 / HAR-13).